The chain runs to 137 residues: 1,4-dihydroxy-2-naphthoyl-CoA hydrolase (137 aa).

Residue Asp13 is part of the active site.

Belongs to the 4-hydroxybenzoyl-CoA thioesterase family. DHNA-CoA hydrolase subfamily.

It carries out the reaction 1,4-dihydroxy-2-naphthoyl-CoA + H2O = 1,4-dihydroxy-2-naphthoate + CoA + H(+). It participates in cofactor biosynthesis; phylloquinone biosynthesis. Its pathway is quinol/quinone metabolism; 1,4-dihydroxy-2-naphthoate biosynthesis; 1,4-dihydroxy-2-naphthoate from chorismate: step 7/7. Its function is as follows. Catalyzes the hydrolysis of 1,4-dihydroxy-2-naphthoyl-CoA (DHNA-CoA) to 1,4-dihydroxy-2-naphthoate (DHNA), a reaction involved in phylloquinone (vitamin K1) biosynthesis. This chain is 1,4-dihydroxy-2-naphthoyl-CoA hydrolase, found in Crocosphaera subtropica (strain ATCC 51142 / BH68) (Cyanothece sp. (strain ATCC 51142)).